A 759-amino-acid chain; its full sequence is Phosphoribosylformylglycinamidine synthase subunit PurL (759 aa).

His-61 is an active-site residue. ATP is bound by residues Tyr-64 and Lys-105. Residue Glu-107 coordinates Mg(2+). Substrate-binding positions include Ser-108 to His-111 and Arg-130. His-109 functions as the Proton acceptor in the catalytic mechanism. Asp-131 is a binding site for Mg(2+). Gln-260 serves as a coordination point for substrate. Asp-288 lines the Mg(2+) pocket. Substrate is bound at residue Glu-332–Gln-334. Residues Asp-520 and Gly-557 each coordinate ATP. Asn-558 is a binding site for Mg(2+). Ser-560 lines the substrate pocket.

This sequence belongs to the FGAMS family. As to quaternary structure, monomer. Part of the FGAM synthase complex composed of 1 PurL, 1 PurQ and 2 PurS subunits.

Its subcellular location is the cytoplasm. The catalysed reaction is N(2)-formyl-N(1)-(5-phospho-beta-D-ribosyl)glycinamide + L-glutamine + ATP + H2O = 2-formamido-N(1)-(5-O-phospho-beta-D-ribosyl)acetamidine + L-glutamate + ADP + phosphate + H(+). It participates in purine metabolism; IMP biosynthesis via de novo pathway; 5-amino-1-(5-phospho-D-ribosyl)imidazole from N(2)-formyl-N(1)-(5-phospho-D-ribosyl)glycinamide: step 1/2. Part of the phosphoribosylformylglycinamidine synthase complex involved in the purines biosynthetic pathway. Catalyzes the ATP-dependent conversion of formylglycinamide ribonucleotide (FGAR) and glutamine to yield formylglycinamidine ribonucleotide (FGAM) and glutamate. The FGAM synthase complex is composed of three subunits. PurQ produces an ammonia molecule by converting glutamine to glutamate. PurL transfers the ammonia molecule to FGAR to form FGAM in an ATP-dependent manner. PurS interacts with PurQ and PurL and is thought to assist in the transfer of the ammonia molecule from PurQ to PurL. This is Phosphoribosylformylglycinamidine synthase subunit PurL from Thermoplasma acidophilum (strain ATCC 25905 / DSM 1728 / JCM 9062 / NBRC 15155 / AMRC-C165).